Consider the following 394-residue polypeptide: Acetyl-CoA acetyltransferase (394 aa).

The Acyl-thioester intermediate role is filled by cysteine 89. Catalysis depends on proton acceptor residues histidine 350 and cysteine 380.

It belongs to the thiolase-like superfamily. Thiolase family. In terms of assembly, homotetramer.

It localises to the cytoplasm. The enzyme catalyses 2 acetyl-CoA = acetoacetyl-CoA + CoA. It participates in biopolymer metabolism; poly-(R)-3-hydroxybutanoate biosynthesis. The protein operates within metabolic intermediate biosynthesis; (R)-mevalonate biosynthesis; (R)-mevalonate from acetyl-CoA: step 1/3. This Thiocystis violacea protein is Acetyl-CoA acetyltransferase.